The chain runs to 1372 residues: DNA-directed RNA polymerase subunit beta' (1372 aa).

Zn(2+)-binding residues include Cys69, Cys71, Cys84, and Cys87. Residues Asp460, Asp462, and Asp464 each contribute to the Mg(2+) site. Zn(2+) contacts are provided by Cys808, Cys882, Cys889, and Cys892.

This sequence belongs to the RNA polymerase beta' chain family. The RNAP catalytic core consists of 2 alpha, 1 beta, 1 beta' and 1 omega subunit. When a sigma factor is associated with the core the holoenzyme is formed, which can initiate transcription. Requires Mg(2+) as cofactor. The cofactor is Zn(2+).

It carries out the reaction RNA(n) + a ribonucleoside 5'-triphosphate = RNA(n+1) + diphosphate. Functionally, DNA-dependent RNA polymerase catalyzes the transcription of DNA into RNA using the four ribonucleoside triphosphates as substrates. This Rickettsia conorii (strain ATCC VR-613 / Malish 7) protein is DNA-directed RNA polymerase subunit beta'.